The following is a 59-amino-acid chain: UPF0391 membrane protein LPC_1949 (59 aa).

Helical transmembrane passes span 5 to 25 (ALIF…GIAV) and 30 to 50 (IAKI…IMGL).

Belongs to the UPF0391 family.

Its subcellular location is the cell membrane. The chain is UPF0391 membrane protein LPC_1949 from Legionella pneumophila (strain Corby).